A 406-amino-acid polypeptide reads, in one-letter code: Angiopoietin-related protein 4 (406 aa).

Positions 1–25 (MSGAPTAGAALMLCAATAVLLSAQG) are cleaved as a signal peptide. Residues 100-143 (EVLHSLQTQLKAQNSRIQQLFHKVAQQQRHLEKQHLRIQHLQSQ) are a coiled coil. Asn-177 carries an N-linked (GlcNAc...) asparagine glycan. The region spanning 179–401 (SRLHRLPRDC…ATTMLIQPMA (223 aa)) is the Fibrinogen C-terminal domain. Cystine bridges form between Cys-188–Cys-216 and Cys-341–Cys-354.

As to quaternary structure, homooligomer; disulfide-linked via Cys residues in the N-terminal part of the protein. The homooligomer undergoes proteolytic processing to release the ANGPTL4 C-terminal chain, which circulates as a monomer. The homooligomer unprocessed form is able to interact with the extracellular matrix. Post-translationally, N-glycosylated. In terms of processing, forms disulfide-linked dimers and tetramers. Cleaved into a smaller N-terminal chain and a larger chain that contains the fibrinogen C-terminal domain; both cleaved and uncleaved forms are detected in the extracellular space. The cleaved form is not present within the cell. In terms of tissue distribution, detected in blood plasma (at protein level). Detected in liver. Detected in white fat tissue and placenta. Expressed at high levels in the placenta, heart, liver, muscle, pancreas and lung but expressed poorly in the brain and kidney.

It localises to the secreted. It is found in the extracellular space. The protein resides in the extracellular matrix. In terms of biological role, mediates inactivation of the lipoprotein lipase LPL, and thereby plays a role in the regulation of triglyceride clearance from the blood serum and in lipid metabolism. May also play a role in regulating glucose homeostasis and insulin sensitivity. Inhibits proliferation, migration, and tubule formation of endothelial cells and reduces vascular leakage. Upon heterologous expression, inhibits the adhesion of endothelial cell to the extracellular matrix (ECM), and inhibits the reorganization of the actin cytoskeleton, formation of actin stress fibers and focal adhesions in endothelial cells that have adhered to ANGPTL4-containing ECM (in vitro). Depending on context, may modulate tumor-related angiogenesis. Functionally, mediates inactivation of the lipoprotein lipase LPL, and thereby plays an important role in the regulation of triglyceride clearance from the blood serum and in lipid metabolism. Has higher activity in LPL inactivation than the uncleaved protein. The protein is Angiopoietin-related protein 4 (ANGPTL4) of Homo sapiens (Human).